We begin with the raw amino-acid sequence, 303 residues long: Bifunctional protein FolD (303 aa).

Residues 165-167 (GRS), serine 190, and isoleucine 231 contribute to the NADP(+) site.

Belongs to the tetrahydrofolate dehydrogenase/cyclohydrolase family. As to quaternary structure, homodimer.

It catalyses the reaction (6R)-5,10-methylene-5,6,7,8-tetrahydrofolate + NADP(+) = (6R)-5,10-methenyltetrahydrofolate + NADPH. The enzyme catalyses (6R)-5,10-methenyltetrahydrofolate + H2O = (6R)-10-formyltetrahydrofolate + H(+). It functions in the pathway one-carbon metabolism; tetrahydrofolate interconversion. Catalyzes the oxidation of 5,10-methylenetetrahydrofolate to 5,10-methenyltetrahydrofolate and then the hydrolysis of 5,10-methenyltetrahydrofolate to 10-formyltetrahydrofolate. In Prochlorococcus marinus (strain NATL2A), this protein is Bifunctional protein FolD.